The chain runs to 249 residues: Beta-crystallin B1 (249 aa).

The interval 1-49 (MSQPAVKASATAAVNPGPDGKGKGAPPPGPAPGSGPAQAPAQPMPAAKG) is disordered. The residue at position 2 (Ser2) is an N-acetylserine. Residues 2–55 (SQPAVKASATAAVNPGPDGKGKGAPPPGPAPGSGPAQAPAQPMPAAKGDLPPGS) form an N-terminal arm region. The segment covering 34–49 (SGPAQAPAQPMPAAKG) has biased composition (low complexity). Beta/gamma crystallin 'Greek key' domains follow at residues 56–95 (YKLVVFEQENFQGRRVEFSGECLNLGDRGFDRVRSIIVTS) and 96–140 (GPWV…RPIR). The segment at 141–145 (MDAQE) is connecting peptide. 2 Beta/gamma crystallin 'Greek key' domains span residues 146 to 187 (HKLC…RVSS) and 188 to 230 (GTWV…RRLR). Residues 232–249 (RQWHREGCFPVLAAEPPK) are C-terminal arm.

The protein belongs to the beta/gamma-crystallin family. Homo/heterodimer, or complexes of higher-order. The structure of beta-crystallin oligomers seems to be stabilized through interactions between the N-terminal arms. Post-translationally, specific cleavages in the N-terminal arm occur during lens maturation and give rise to truncated forms, leading to impaired oligomerization and protein insolubilization.

In terms of biological role, crystallins are the dominant structural components of the vertebrate eye lens. The polypeptide is Beta-crystallin B1 (CRYBB1) (Sus scrofa (Pig)).